The chain runs to 508 residues: 6-phosphogluconate dehydrogenase, decarboxylating 2, chloroplastic (508 aa).

Residues 1 to 12 (MASPAPAPPAAS) constitute a chloroplast transit peptide. Residues 28–33 (GLATMG), 51–53 (NRT), 95–97 (VQA), and Asn123 contribute to the NADP(+) site. Residues Asn123 and 149 to 151 (SGG) contribute to the substrate site. The active-site Proton acceptor is Lys203. Residue 206 to 207 (HN) participates in substrate binding. Glu210 functions as the Proton donor in the catalytic mechanism. Tyr211, Lys284, Arg311, Arg475, and His481 together coordinate substrate.

Belongs to the 6-phosphogluconate dehydrogenase family. In terms of assembly, homodimer.

Its subcellular location is the plastid. It localises to the chloroplast. It catalyses the reaction 6-phospho-D-gluconate + NADP(+) = D-ribulose 5-phosphate + CO2 + NADPH. The protein operates within carbohydrate degradation; pentose phosphate pathway; D-ribulose 5-phosphate from D-glucose 6-phosphate (oxidative stage): step 3/3. Its function is as follows. Catalyzes the oxidative decarboxylation of 6-phosphogluconate to ribulose 5-phosphate and CO(2), with concomitant reduction of NADP to NADPH. The chain is 6-phosphogluconate dehydrogenase, decarboxylating 2, chloroplastic (G6PGH2) from Oryza sativa subsp. japonica (Rice).